The primary structure comprises 277 residues: MELIEKHASFGGWQNVYRHYSQSLKCEMNVGVYLPPKAANEKLPVLYWLSGLTCNEQNFITKSGMQRYAAEHNIIVVAPDTSPRGSHVADADRYDLGQGAGFYLNATQAPWNEHYKMYDYIRNELPDLVMQHFPATTRKSISGHSMGGLGALVLALRNPDEYVSVSAFSPIVSPSQVPWGQQAFAAYLGENKDAWLDYDPVSLISQGQRVAEIMVDQGLSDDFYAEQLRTPNLEKICQEMNIKTLIRYHEGYDHSYYFVSSFIGEHIAYHANKLNMR.

Catalysis depends on charge relay system residues S145, D221, and H254.

The protein belongs to the esterase D family.

It catalyses the reaction S-formylglutathione + H2O = formate + glutathione + H(+). Its function is as follows. Serine hydrolase involved in the detoxification of formaldehyde. Hydrolyzes S-formylglutathione to glutathione and formate. This chain is S-formylglutathione hydrolase FrmB (frmB), found in Escherichia coli O139:H28 (strain E24377A / ETEC).